Here is a 147-residue protein sequence, read N- to C-terminus: Small ribosomal subunit protein bS16 (147 aa).

The tract at residues 89-147 (AWTHGNNPKKAEPGKKAQERAKERADKAEAKAAAAAEAAAAPAEEAPAEAAPAEETSES) is disordered. The segment covering 97–118 (KKAEPGKKAQERAKERADKAEA) has biased composition (basic and acidic residues). A compositionally biased stretch (low complexity) spans 119 to 147 (KAAAAAEAAAAPAEEAPAEAAPAEETSES).

Belongs to the bacterial ribosomal protein bS16 family.

This chain is Small ribosomal subunit protein bS16, found in Hyphomonas neptunium (strain ATCC 15444).